The following is a 575-amino-acid chain: Muellerian-inhibiting factor (575 aa).

Positions 1-20 (MQGPSLSQLVLVLMGALLEA) are cleaved as a signal peptide. Residues 21-466 (GTPREEVSST…ERSGPARAQR (446 aa)) constitute a propeptide that is removed on maturation. N-linked (GlcNAc...) asparagine glycosylation is found at Asn78 and Asn343. Cystine bridges form between Cys477/Cys541, Cys503/Cys572, and Cys507/Cys574.

It belongs to the TGF-beta family. As to quaternary structure, homodimer; disulfide-linked. In terms of processing, preproprotein is proteolytically processed to generate N- and C-terminal cleavage products that homodimerize and associate to form a biologically active non-covalent complex. Binding of the non-covalent complex to AMHR2 induces dissociation of the pro-region from the mature C-terminal dimer. The N-terminal portion of the protein, despite having no intrinsic activity, has the role of amplifying the activity of the C-terminus. In terms of tissue distribution, detected in fetal Sertoli cells. Expressed in granulosa cells of growing follicles but also in theca cells of preovulatory follicles and corpora lutea (at protein level).

The protein localises to the secreted. Plays an important role in several reproductive functions. Induces Muellerian duct regression during male fetal sexual differentiation and plays a role in Leydig cell differentiation and function. In female acts as a negative regulator of the primordial to primary follicle transition and decreases FSH sensitivity of growing follicles. AMH signals by binding to a specific type-II receptor, AMHR2, that heterodimerizes with type-I receptors (ACVR1 and BMPR1A), and recruiting SMAD proteins that are translocated to the nucleus to regulate target gene expression. In Sus scrofa (Pig), this protein is Muellerian-inhibiting factor (AMH).